The following is a 363-amino-acid chain: uncharacterized protein (363 aa).

Residues 109 to 329 (RAALRELRSR…VEELQAQTRE (221 aa)) adopt a coiled-coil conformation.

This is an uncharacterized protein from Homo sapiens (Human).